Consider the following 505-residue polypeptide: Photosystem II CP47 reaction center protein (505 aa).

Topologically, residues Gly-1–Ile-19 are cytoplasmic. Residues His-8, His-22, His-25, His-99, and His-113 each coordinate chlorophyll a. Residues Ala-20–Ser-35 form a helical membrane-spanning segment. At Met-36–His-99 the chain is on the lumenal side. The helical transmembrane segment at Ile-100 to Trp-114 threads the bilayer. Over Val-115–Phe-138 the chain is Cytoplasmic. The chain crosses the membrane as a helical span at residues Gly-139 to Phe-155. The chlorophyll a site is built by His-141, His-156, His-200, His-201, and His-215. The Lumenal segment spans residues His-156–His-201. The chain crosses the membrane as a helical span at residues Ile-202–Leu-217. Residues Val-218–Thr-235 lie on the Cytoplasmic side of the membrane. Residues Val-236–Val-251 form a helical membrane-spanning segment. The Lumenal portion of the chain corresponds to Ala-252–Ala-455. Chlorophyll a contacts are provided by His-454, His-465, and His-468. Residues Val-456–Arg-471 form a helical membrane-spanning segment. Over Thr-472–Lys-505 the chain is Cytoplasmic.

The protein belongs to the PsbB/PsbC family. PsbB subfamily. In terms of assembly, PSII is composed of 1 copy each of membrane proteins PsbA, PsbB, PsbC, PsbD, PsbE, PsbF, PsbH, PsbI, PsbJ, PsbK, PsbL, PsbM, PsbT, PsbX, PsbY, PsbZ, Psb30/Ycf12, peripheral proteins PsbO, CyanoQ (PsbQ), PsbU, PsbV and a large number of cofactors. It forms dimeric complexes. Binds multiple chlorophylls. PSII binds additional chlorophylls, carotenoids and specific lipids. is required as a cofactor.

Its subcellular location is the cellular thylakoid membrane. One of the components of the core complex of photosystem II (PSII). It binds chlorophyll and helps catalyze the primary light-induced photochemical processes of PSII. PSII is a light-driven water:plastoquinone oxidoreductase, using light energy to abstract electrons from H(2)O, generating O(2) and a proton gradient subsequently used for ATP formation. The chain is Photosystem II CP47 reaction center protein from Thermostichus vulcanus (Synechococcus vulcanus).